A 223-amino-acid polypeptide reads, in one-letter code: Flagellar L-ring protein (223 aa).

Positions 1-18 are cleaved as a signal peptide; sequence MKKSLMALIVVGSFLLSA. The N-palmitoyl cysteine moiety is linked to residue Cys-19. The S-diacylglycerol cysteine moiety is linked to residue Cys-19.

This sequence belongs to the FlgH family. As to quaternary structure, the basal body constitutes a major portion of the flagellar organelle and consists of four rings (L,P,S, and M) mounted on a central rod.

It localises to the cell outer membrane. The protein resides in the bacterial flagellum basal body. Its function is as follows. Assembles around the rod to form the L-ring and probably protects the motor/basal body from shearing forces during rotation. The polypeptide is Flagellar L-ring protein (Herminiimonas arsenicoxydans).